The sequence spans 728 residues: Phosphoribosylformylglycinamidine synthase subunit PurL (728 aa).

The active site involves histidine 42. The ATP site is built by tyrosine 45 and lysine 84. Mg(2+) is bound at residue glutamate 86. Residues 87-90 (SHNH) and arginine 109 contribute to the substrate site. Residue histidine 88 is the Proton acceptor of the active site. Aspartate 110 lines the Mg(2+) pocket. Glutamine 237 is a binding site for substrate. Mg(2+) is bound at residue aspartate 265. Residue 309–311 (ESQ) participates in substrate binding. 2 residues coordinate ATP: aspartate 491 and glycine 528. Asparagine 529 lines the Mg(2+) pocket. Serine 531 serves as a coordination point for substrate.

It belongs to the FGAMS family. As to quaternary structure, monomer. Part of the FGAM synthase complex composed of 1 PurL, 1 PurQ and 2 PurS subunits.

It is found in the cytoplasm. The enzyme catalyses N(2)-formyl-N(1)-(5-phospho-beta-D-ribosyl)glycinamide + L-glutamine + ATP + H2O = 2-formamido-N(1)-(5-O-phospho-beta-D-ribosyl)acetamidine + L-glutamate + ADP + phosphate + H(+). It participates in purine metabolism; IMP biosynthesis via de novo pathway; 5-amino-1-(5-phospho-D-ribosyl)imidazole from N(2)-formyl-N(1)-(5-phospho-D-ribosyl)glycinamide: step 1/2. Part of the phosphoribosylformylglycinamidine synthase complex involved in the purines biosynthetic pathway. Catalyzes the ATP-dependent conversion of formylglycinamide ribonucleotide (FGAR) and glutamine to yield formylglycinamidine ribonucleotide (FGAM) and glutamate. The FGAM synthase complex is composed of three subunits. PurQ produces an ammonia molecule by converting glutamine to glutamate. PurL transfers the ammonia molecule to FGAR to form FGAM in an ATP-dependent manner. PurS interacts with PurQ and PurL and is thought to assist in the transfer of the ammonia molecule from PurQ to PurL. In Campylobacter jejuni subsp. jejuni serotype O:23/36 (strain 81-176), this protein is Phosphoribosylformylglycinamidine synthase subunit PurL.